Reading from the N-terminus, the 107-residue chain is MIQVLLVIICLAVFPFQGSSKTLKSGNVNDYEVVNPGTVTGLPKGAVEEKHEPMKGNTLQKFPLCTTGPCCRQCKLKPAGTTCWKTSRTSHYCTGKSCDCPSYPGNG.

The N-terminal stretch at 1-20 is a signal peptide; that stretch reads MIQVLLVIICLAVFPFQGSS. The propeptide occupies 21 to 64; the sequence is KTLKSGNVNDYEVVNPGTVTGLPKGAVEEKHEPMKGNTLQKFPL. 4 disulfides stabilise this stretch: cysteine 65/cysteine 74, cysteine 70/cysteine 93, cysteine 71/cysteine 98, and cysteine 83/cysteine 100. A Disintegrin domain is found at 65-105; it reads CTTGPCCRQCKLKPAGTTCWKTSRTSHYCTGKSCDCPSYPG. Positions 85–87 match the Cell attachment site; atypical (KTS) motif; sequence KTS. The propeptide occupies 106–107; sequence NG.

In terms of assembly, monomer. In terms of tissue distribution, expressed by the venom gland.

It localises to the secreted. In terms of biological role, specifically interacts with the alpha-1/beta-1 integrin (ITGA1/ITGB1). Exhibits highly inhibitory effects on cell adhesion and cell migration to collagens I and IV. Also shows in vivo anti-angiogenic activity. This chain is Disintegrin lebestatin, found in Macrovipera lebetinus (Levantine viper).